The chain runs to 415 residues: Ubp4-interactor sfp47 (415 aa).

2 positions are modified to phosphoserine: S221 and S226. A Phosphothreonine modification is found at T231. A Phosphoserine modification is found at S235. The SH3 domain maps to 352–415 (PIFAYVRALY…PSNYIEELEY (64 aa)).

In terms of assembly, interacts with ubp4.

Its subcellular location is the cytoplasm. It is found in the endosome. Functionally, required for the regulation of activity and recruitment of ubp4 to endosomes. The polypeptide is Ubp4-interactor sfp47 (sfp47) (Schizosaccharomyces pombe (strain 972 / ATCC 24843) (Fission yeast)).